Reading from the N-terminus, the 396-residue chain is Cytochrome b (396 aa).

4 helical membrane passes run 32-52, 76-98, 113-133, and 179-199; these read FGSLLGVNLVILIISGLTLAM, WLLRYIHANGASFFFIWVYLHIG, LWSIGVVIFILMMATAFIGYV, and FFSLHYLLPFILAALVVMHLL. Residues histidine 82 and histidine 96 each contribute to the heme b site. The heme b site is built by histidine 183 and histidine 197. Residue histidine 202 coordinates a ubiquinone. The next 4 membrane-spanning stretches (helical) occupy residues 225 to 245, 289 to 309, 321 to 341, and 348 to 368; these read FTSKDLVGFVWMAILLSIFVF, LGGVIAMFGALLILFPLALIH, LLNLLFWIFVFNFFVLLWVGA, and YILIGQISTIIYFLYFVILMI.

It belongs to the cytochrome b family. Fungal cytochrome b-c1 complex contains 10 subunits; 3 respiratory subunits, 2 core proteins and 5 low-molecular weight proteins. Cytochrome b-c1 complex is a homodimer. The cofactor is heme b.

The protein resides in the mitochondrion inner membrane. Functionally, component of the ubiquinol-cytochrome c reductase complex (complex III or cytochrome b-c1 complex) that is part of the mitochondrial respiratory chain. The b-c1 complex mediates electron transfer from ubiquinol to cytochrome c. Contributes to the generation of a proton gradient across the mitochondrial membrane that is then used for ATP synthesis. This Spizellomyces punctatus protein is Cytochrome b (cob).